The chain runs to 325 residues: Phospho-N-acetylmuramoyl-pentapeptide-transferase (325 aa).

9 consecutive transmembrane segments (helical) span residues 7–27 (LFVL…FIPF), 57–77 (IVIV…ITGF), 81–101 (LLLL…DDYL), 122–142 (VIAA…FIAI), 146–166 (TFGF…LLGA), 186–206 (IAFG…TALF), 227–247 (VFMG…IAIL), 252–272 (LMLI…IIQV), and 302–322 (VVVT…YIGV).

This sequence belongs to the glycosyltransferase 4 family. MraY subfamily. Mg(2+) serves as cofactor.

It localises to the cell membrane. The enzyme catalyses UDP-N-acetyl-alpha-D-muramoyl-L-alanyl-gamma-D-glutamyl-meso-2,6-diaminopimeloyl-D-alanyl-D-alanine + di-trans,octa-cis-undecaprenyl phosphate = di-trans,octa-cis-undecaprenyl diphospho-N-acetyl-alpha-D-muramoyl-L-alanyl-D-glutamyl-meso-2,6-diaminopimeloyl-D-alanyl-D-alanine + UMP. The protein operates within cell wall biogenesis; peptidoglycan biosynthesis. Functionally, catalyzes the initial step of the lipid cycle reactions in the biosynthesis of the cell wall peptidoglycan: transfers peptidoglycan precursor phospho-MurNAc-pentapeptide from UDP-MurNAc-pentapeptide onto the lipid carrier undecaprenyl phosphate, yielding undecaprenyl-pyrophosphoryl-MurNAc-pentapeptide, known as lipid I. In Shouchella clausii (strain KSM-K16) (Alkalihalobacillus clausii), this protein is Phospho-N-acetylmuramoyl-pentapeptide-transferase.